Reading from the N-terminus, the 224-residue chain is tRNA (guanine-N(7)-)-methyltransferase (224 aa).

4 residues coordinate S-adenosyl-L-methionine: Glu-56, Glu-81, Asp-108, and Asp-131. The active site involves Asp-131. Substrate is bound by residues Lys-135, Asp-167, and 202–205 (TKFE).

It belongs to the class I-like SAM-binding methyltransferase superfamily. TrmB family.

The enzyme catalyses guanosine(46) in tRNA + S-adenosyl-L-methionine = N(7)-methylguanosine(46) in tRNA + S-adenosyl-L-homocysteine. It functions in the pathway tRNA modification; N(7)-methylguanine-tRNA biosynthesis. Its function is as follows. Catalyzes the formation of N(7)-methylguanine at position 46 (m7G46) in tRNA. In Nitrosomonas europaea (strain ATCC 19718 / CIP 103999 / KCTC 2705 / NBRC 14298), this protein is tRNA (guanine-N(7)-)-methyltransferase.